The following is a 610-amino-acid chain: Zinc metalloproteinase-disintegrin-like BITM06A (610 aa).

Positions 1–20 (MIQVLLVTICLAAFPYQGSS) are cleaved as a signal peptide. Positions 21-189 (IILESGNVND…KKASQLVVTA (169 aa)) are excised as a propeptide. The Peptidase M12B domain occupies 198 to 394 (RYVELFIVVD…ENPQCILNEP (197 aa)). Residues Glu201 and Asp285 each contribute to the Ca(2+) site. 3 disulfide bridges follow: Cys309–Cys389, Cys349–Cys373, and Cys351–Cys356. Residue His334 coordinates Zn(2+). Residue Glu335 is part of the active site. His338 and His344 together coordinate Zn(2+). Residue Asn372 is glycosylated (N-linked (GlcNAc...) asparagine). 8 residues coordinate Ca(2+): Cys389, Asn392, Val404, Asn407, Leu409, Glu411, Glu414, and Asp417. In terms of domain architecture, Disintegrin spans 402-488 (PPVCGNELLE…ECPADVFHKN (87 aa)). Disulfide bonds link Cys405–Cys434, Cys416–Cys429, Cys418–Cys424, Cys428–Cys451, Cys442–Cys448, Cys447–Cys473, Cys460–Cys480, Cys467–Cys499, Cys492–Cys504, Cys511–Cys561, Cys526–Cys572, Cys539–Cys549, Cys556–Cys598, and Cys592–Cys603. The short motif at 466-468 (ECD) is the D/ECD-tripeptide element. The Ca(2+) site is built by Asp468, Pro469, Glu471, Asp483, and Val484.

This sequence belongs to the venom metalloproteinase (M12B) family. P-III subfamily. P-IIIa sub-subfamily. As to quaternary structure, monomer. The cofactor is Zn(2+). Expressed by the venom gland.

It is found in the secreted. Snake venom metalloproteinase that impairs hemostasis in the envenomed animal. This is Zinc metalloproteinase-disintegrin-like BITM06A from Bothrops insularis (Golden lancehead).